The following is a 505-amino-acid chain: 4-alpha-glucanotransferase (505 aa).

It belongs to the disproportionating enzyme family.

Its subcellular location is the cytoplasm. The enzyme catalyses Transfers a segment of a (1-&gt;4)-alpha-D-glucan to a new position in an acceptor, which may be glucose or a (1-&gt;4)-alpha-D-glucan.. The polypeptide is 4-alpha-glucanotransferase (malQ) (Synechocystis sp. (strain ATCC 27184 / PCC 6803 / Kazusa)).